The primary structure comprises 118 residues: Large ribosomal subunit protein bL20 (118 aa).

The protein belongs to the bacterial ribosomal protein bL20 family.

Binds directly to 23S ribosomal RNA and is necessary for the in vitro assembly process of the 50S ribosomal subunit. It is not involved in the protein synthesizing functions of that subunit. The sequence is that of Large ribosomal subunit protein bL20 from Bacillus cytotoxicus (strain DSM 22905 / CIP 110041 / 391-98 / NVH 391-98).